The chain runs to 199 residues: dITP/XTP pyrophosphatase (199 aa).

7–12 contributes to the substrate binding site; the sequence is TTNLHK. Residues Glu41 and Asp70 each coordinate Mg(2+). Asp70 (proton acceptor) is an active-site residue. Substrate is bound by residues Ser71, 154 to 157, Lys177, and 182 to 183; these read FGYD and HR.

This sequence belongs to the HAM1 NTPase family. Homodimer. Mg(2+) serves as cofactor.

It catalyses the reaction XTP + H2O = XMP + diphosphate + H(+). The enzyme catalyses dITP + H2O = dIMP + diphosphate + H(+). It carries out the reaction ITP + H2O = IMP + diphosphate + H(+). Functionally, pyrophosphatase that catalyzes the hydrolysis of nucleoside triphosphates to their monophosphate derivatives, with a high preference for the non-canonical purine nucleotides XTP (xanthosine triphosphate), dITP (deoxyinosine triphosphate) and ITP. Seems to function as a house-cleaning enzyme that removes non-canonical purine nucleotides from the nucleotide pool, thus preventing their incorporation into DNA/RNA and avoiding chromosomal lesions. The protein is dITP/XTP pyrophosphatase of Protochlamydia amoebophila (strain UWE25).